Consider the following 431-residue polypeptide: Glutamate-1-semialdehyde 2,1-aminomutase (431 aa).

N6-(pyridoxal phosphate)lysine is present on Lys269.

The protein belongs to the class-III pyridoxal-phosphate-dependent aminotransferase family. HemL subfamily. Homodimer. Requires pyridoxal 5'-phosphate as cofactor.

It localises to the cytoplasm. The enzyme catalyses (S)-4-amino-5-oxopentanoate = 5-aminolevulinate. It participates in porphyrin-containing compound metabolism; protoporphyrin-IX biosynthesis; 5-aminolevulinate from L-glutamyl-tRNA(Glu): step 2/2. It functions in the pathway porphyrin-containing compound metabolism; chlorophyll biosynthesis. This chain is Glutamate-1-semialdehyde 2,1-aminomutase, found in Chlorobium limicola (strain DSM 245 / NBRC 103803 / 6330).